We begin with the raw amino-acid sequence, 147 residues long: DNA base-flipping protein (147 aa).

The protein belongs to the MGMT family. ATL subfamily. As to quaternary structure, interacts with several proteins, including UvrA, UvrD and the three subunits of the RNA polymerase.

In terms of biological role, involved in DNA damage recognition. Binds DNA containing O(6)-methylguanine and larger O(6)-alkylguanine adducts. Binds to the damaged base and flips the base out of the DNA duplex into an extrahelical conformation, which allows processing by repair proteins. Also affects the regulation of gene expression in response to alkylation. The polypeptide is DNA base-flipping protein (Thermus thermophilus (strain ATCC 27634 / DSM 579 / HB8)).